We begin with the raw amino-acid sequence, 496 residues long: Lysine--tRNA ligase (496 aa).

Glutamate 407 and glutamate 414 together coordinate Mg(2+).

Belongs to the class-II aminoacyl-tRNA synthetase family. In terms of assembly, homodimer. Mg(2+) serves as cofactor.

It is found in the cytoplasm. It catalyses the reaction tRNA(Lys) + L-lysine + ATP = L-lysyl-tRNA(Lys) + AMP + diphosphate. The polypeptide is Lysine--tRNA ligase (Staphylococcus haemolyticus (strain JCSC1435)).